Here is an 851-residue protein sequence, read N- to C-terminus: Probable alpha,alpha-trehalose-phosphate synthase [UDP-forming] 7 (851 aa).

At serine 5 the chain carries Phosphoserine. A Phosphothreonine modification is found at threonine 32. Residues 59–540 form a glycosyltransferase region; that stretch reads DRMIIVANRL…SRSFLQDLER (482 aa).

It in the N-terminal section; belongs to the glycosyltransferase 20 family. In the C-terminal section; belongs to the trehalose phosphatase family. Binds to the phosphopeptide-binding site of GRF/14-3-3. Post-translationally, phosphorylated. In terms of tissue distribution, expressed in seedlings, leaves, roots, stems, flowers and siliques.

It carries out the reaction D-glucose 6-phosphate + UDP-alpha-D-glucose = alpha,alpha-trehalose 6-phosphate + UDP + H(+). The sequence is that of Probable alpha,alpha-trehalose-phosphate synthase [UDP-forming] 7 (TPS7) from Arabidopsis thaliana (Mouse-ear cress).